A 347-amino-acid polypeptide reads, in one-letter code: NADH-ubiquinone oxidoreductase chain 2 (347 aa).

11 helical membrane-spanning segments follow: residues 3 to 23, 25 to 45, 60 to 80, 96 to 116, 122 to 142, 153 to 173, 178 to 198, 200 to 220, 237 to 257, 274 to 294, and 323 to 343; these read PPIL…VLTS, HWLL…PILM, FLTQ…NLMF, GLVT…FWVP, ISLS…LSVL, LLIT…LNQT, ILAY…TYNP, LMVL…MLFM, LPLM…LPPL, DMII…YFYM, and IILL…TPMM.

The protein belongs to the complex I subunit 2 family. In terms of assembly, core subunit of respiratory chain NADH dehydrogenase (Complex I) which is composed of 45 different subunits. Interacts with TMEM242.

The protein resides in the mitochondrion inner membrane. The catalysed reaction is a ubiquinone + NADH + 5 H(+)(in) = a ubiquinol + NAD(+) + 4 H(+)(out). Core subunit of the mitochondrial membrane respiratory chain NADH dehydrogenase (Complex I) which catalyzes electron transfer from NADH through the respiratory chain, using ubiquinone as an electron acceptor. Essential for the catalytic activity and assembly of complex I. The protein is NADH-ubiquinone oxidoreductase chain 2 of Phoca vitulina (Harbor seal).